Reading from the N-terminus, the 239-residue chain is Pyridoxine 5'-phosphate synthase (239 aa).

3-amino-2-oxopropyl phosphate is bound at residue Asn-7. Residue 9 to 10 coordinates 1-deoxy-D-xylulose 5-phosphate; the sequence is DH. Residue Arg-18 participates in 3-amino-2-oxopropyl phosphate binding. His-43 acts as the Proton acceptor in catalysis. 2 residues coordinate 1-deoxy-D-xylulose 5-phosphate: Arg-45 and His-50. Glu-70 (proton acceptor) is an active-site residue. Position 100 (Thr-100) interacts with 1-deoxy-D-xylulose 5-phosphate. Residue His-191 is the Proton donor of the active site. Residues Gly-192 and 213–214 each bind 3-amino-2-oxopropyl phosphate; that span reads GH.

It belongs to the PNP synthase family. As to quaternary structure, homooctamer; tetramer of dimers.

Its subcellular location is the cytoplasm. It carries out the reaction 3-amino-2-oxopropyl phosphate + 1-deoxy-D-xylulose 5-phosphate = pyridoxine 5'-phosphate + phosphate + 2 H2O + H(+). The protein operates within cofactor biosynthesis; pyridoxine 5'-phosphate biosynthesis; pyridoxine 5'-phosphate from D-erythrose 4-phosphate: step 5/5. Its function is as follows. Catalyzes the complicated ring closure reaction between the two acyclic compounds 1-deoxy-D-xylulose-5-phosphate (DXP) and 3-amino-2-oxopropyl phosphate (1-amino-acetone-3-phosphate or AAP) to form pyridoxine 5'-phosphate (PNP) and inorganic phosphate. The polypeptide is Pyridoxine 5'-phosphate synthase (Nostoc sp. (strain PCC 7120 / SAG 25.82 / UTEX 2576)).